Reading from the N-terminus, the 878-residue chain is MTGHEIRQRFLDFFAERGHRVVRSSSLVPANDPTLLFTNAGMNQFKDVFLGQEKRDYVRAASSQKCVRAGGKHNDLENVGYTRRHHTFFEMLGNFSFGDYFKADAIAYAWDLITKDYGLPKEKLYVTVFREDDEAEELWQKVTGIPKSRIFRLDEKDNFWQMGETGPCGPCSEIHYDLGIEAAEPGREHEQFPDDAGGRFVEIWNLVFMQYDRDQSGKLNPLPRPSIDTGMGLERIAAILQGKITNYDTDLIYPIIEHAAEIFGVTPGADTRTDTVLRIVADHARATEFLIHDGVVPSNEGRGYVLRKIMRRALRNVRMIGIEDPFLYKLTGFVGELMKGPYPELLESIQRVARVTKDEEHRYATTFLVAERVFNDAIKSIQGNTIPGALSFKLYDTYGLALDEQEDMAREHGLAIDRESFDTEMEQQRERARASWKGAEKAAVTPAYQKLVEQGRTKFLGYSELEAASRVVGLIVDKESVQQVPAGAKAELVLDQTPFYAESGGQVGDHGILYSAAGEKVADVETAFPGVPGLTVHRIAALAPIAVGDTLRAEVAVPLRDATRRNHTATHLLHASLRTVLGKHVKQAGSIVDPGRLRFDFTHYAGLDHAELEEVERLMNQEILRNTAVQTDILPLEQAIATGAMALFGEKYGDQVRVVSVPGFSRELCGGTHVQRTGDIGVAKIVYEGSISAGVRRIEAITGEAALRQYQETSGAVKRVADMVKVSEPALIEHIEKMIANERALEKQVEQLKNKLAQAAVGSLDAEARTIKGVKVVAAHLDGMDRAQMRALADSLRNKWKSAVVVLASVEDGNVAIISAVTKDLTAKVHAGKLASSLAQAVGGKGGGRPDMAEAGGKDPSCLDEALTAVYADVESKL.

The Zn(2+) site is built by histidine 567, histidine 571, cysteine 669, and histidine 673. Positions 841–860 are disordered; the sequence is AVGGKGGGRPDMAEAGGKDP.

It belongs to the class-II aminoacyl-tRNA synthetase family. Requires Zn(2+) as cofactor.

It localises to the cytoplasm. The enzyme catalyses tRNA(Ala) + L-alanine + ATP = L-alanyl-tRNA(Ala) + AMP + diphosphate. Functionally, catalyzes the attachment of alanine to tRNA(Ala) in a two-step reaction: alanine is first activated by ATP to form Ala-AMP and then transferred to the acceptor end of tRNA(Ala). Also edits incorrectly charged Ser-tRNA(Ala) and Gly-tRNA(Ala) via its editing domain. The chain is Alanine--tRNA ligase from Solibacter usitatus (strain Ellin6076).